Consider the following 205-residue polypeptide: Large ribosomal subunit protein uL4 (205 aa).

A disordered region spans residues 44–79; the sequence is RAGTKAQKTRREVSGGGAKPWRQKGTGRARAGSSRS.

It belongs to the universal ribosomal protein uL4 family. Part of the 50S ribosomal subunit.

Its function is as follows. One of the primary rRNA binding proteins, this protein initially binds near the 5'-end of the 23S rRNA. It is important during the early stages of 50S assembly. It makes multiple contacts with different domains of the 23S rRNA in the assembled 50S subunit and ribosome. In terms of biological role, forms part of the polypeptide exit tunnel. The polypeptide is Large ribosomal subunit protein uL4 (Coxiella burnetii (strain RSA 331 / Henzerling II)).